The chain runs to 305 residues: Methionyl-tRNA formyltransferase (305 aa).

Residue 111-114 (SLLP) coordinates (6S)-5,6,7,8-tetrahydrofolate.

The protein belongs to the Fmt family.

The catalysed reaction is L-methionyl-tRNA(fMet) + (6R)-10-formyltetrahydrofolate = N-formyl-L-methionyl-tRNA(fMet) + (6S)-5,6,7,8-tetrahydrofolate + H(+). In terms of biological role, attaches a formyl group to the free amino group of methionyl-tRNA(fMet). The formyl group appears to play a dual role in the initiator identity of N-formylmethionyl-tRNA by promoting its recognition by IF2 and preventing the misappropriation of this tRNA by the elongation apparatus. This Helicobacter pylori (strain HPAG1) protein is Methionyl-tRNA formyltransferase.